The chain runs to 417 residues: Glucose-1-phosphate adenylyltransferase (417 aa).

Alpha-D-glucose 1-phosphate contacts are provided by residues tyrosine 105, glycine 170, 185–186 (EK), and serine 203.

Belongs to the bacterial/plant glucose-1-phosphate adenylyltransferase family. As to quaternary structure, homotetramer.

It catalyses the reaction alpha-D-glucose 1-phosphate + ATP + H(+) = ADP-alpha-D-glucose + diphosphate. It participates in glycan biosynthesis; glycogen biosynthesis. In terms of biological role, involved in the biosynthesis of ADP-glucose, a building block required for the elongation reactions to produce glycogen. Catalyzes the reaction between ATP and alpha-D-glucose 1-phosphate (G1P) to produce pyrophosphate and ADP-Glc. The protein is Glucose-1-phosphate adenylyltransferase of Granulibacter bethesdensis (strain ATCC BAA-1260 / CGDNIH1).